Here is a 190-residue protein sequence, read N- to C-terminus: E3 ubiquitin-protein ligase RNF183 (190 aa).

The Cytoplasmic segment spans residues 1–159 (MSEPQGQELR…RECVRNPHFR (159 aa)). The segment at 13–60 (CPVCWNPFNNTFHTPKVLDCCHSFCVECLAHLSLVTPARRRLLCPLCR) adopts an RING-type zinc-finger fold. The helical; Anchor for type IV membrane protein transmembrane segment at 160 to 180 (IFAYLMAVILSVTLLLIFSIF) threads the bilayer. At 181–190 (WTKQFFWGMG) the chain is on the lumenal side.

In terms of assembly, interacts with FATE1. Interacts with SEC16A. Interacts with BCL2L1. Post-translationally, autoubiquitinated (in vitro). As to expression, highly expressed in the kidney and testis.

Its subcellular location is the endoplasmic reticulum membrane. The protein resides in the endoplasmic reticulum. The protein localises to the golgi apparatus. It localises to the cis-Golgi network membrane. It is found in the lysosome membrane. The catalysed reaction is S-ubiquitinyl-[E2 ubiquitin-conjugating enzyme]-L-cysteine + [acceptor protein]-L-lysine = [E2 ubiquitin-conjugating enzyme]-L-cysteine + N(6)-ubiquitinyl-[acceptor protein]-L-lysine.. It participates in protein modification; protein ubiquitination. In terms of biological role, acts as an E3 ubiquitin ligase catalyzing the covalent attachment of ubiquitin moieties onto substrate proteins. Triggers apoptosis in response to prolonged ER stress by mediating the polyubiquitination and subsequent proteasomal degradation of BCL2L1. May collaborate with FATE1 to restrain BIK protein levels thus regulating apoptotic signaling. The chain is E3 ubiquitin-protein ligase RNF183 (Rnf183) from Mus musculus (Mouse).